A 140-amino-acid chain; its full sequence is Cysteine proteinase inhibitor 1 (140 aa).

Residues 1-26 (MRKYRVAGLVAALLVLHSLATPSAQA) form the signal peptide. The Cystatin domain maps to 48-135 (GGVEPVGNEN…KELQEFKPVD (88 aa)). Residues 91-95 (QVVAG) carry the Secondary area of contact motif.

It belongs to the cystatin family. Phytocystatin subfamily.

It localises to the secreted. There are two distinct cystatins in rice seeds (Oryzacystatin-1 and -2) with different specificities against cysteine proteinases. May be involved in the control of germination by inhibition of endogenous cysteine proteinases. May play a role in defense by inhibiting exogenous proteases such as those present in digestive tracks of insects and nematodes. This chain is Cysteine proteinase inhibitor 1, found in Oryza sativa subsp. japonica (Rice).